The sequence spans 594 residues: MATSEPAESDAVRAKEWEQLEPVQRDVYKDTKLENCSNPASMGNQDPKQDIVSVLEEEEPSSGKGKKASPSSLKKIARPKTAGTSAKLQQDDEHREEKQKSQSKLTKEVTLRKKSSNSKKSSEYGLLENKSLHSKHTPSEKKLLKSSSRGKNSNQNSDSLKKKPDTANDHRKSLSHSASDVNKDEIPTRKKCDKLPNNKLSDKGDKNQTSKKCEKVCRHSASHTKEDKIQTGEKRKSHCRTPSKPEKAPGSGKPYECNHCGKVLSHKQGLLDHQRTHTGEKPYECNECGIAFSQKSHLVVHQRTHTGEKPYECEQCGKAHGHKHALTDHLRIHTGEKPYKCNECGKTFRHSSNLMQHLRSHTGEKPYECKECGKSFRYNSSLTEHVRTHTGEIPYECNECGKAFKYGSSLTKHMRIHTGEKPFECNECGKTFSKKSHLVIHQRTHTKEKPYKCDECGKAFGHSSSLTYHMRTHTGDCPFECNQCGKAFKQIEGLTQHQRVHTGEKPYECVECGKAFSQKSHLIVHQRTHTGEKPFECYECGKAFNAKSQLVIHQRSHTGEKPYECIECGKAFKQNASLTKHMKIHSEEQSEEED.

Positions 1–253 (MATSEPAESD…KPEKAPGSGK (253 aa)) are disordered. Position 3 is a phosphothreonine (Thr3). In terms of domain architecture, KRAB spans 3 to 74 (TSEPAESDAV…GKKASPSSLK (72 aa)). Ser9 is modified (phosphoserine). Basic and acidic residues predominate over residues 10-33 (DAVRAKEWEQLEPVQRDVYKDTKL). Over residues 34–46 (ENCSNPASMGNQD) the composition is skewed to polar residues. Over residues 89-111 (QQDDEHREEKQKSQSKLTKEVTL) the composition is skewed to basic and acidic residues. Over residues 145-158 (KSSSRGKNSNQNSD) the composition is skewed to polar residues. Basic and acidic residues-rich tracts occupy residues 159-172 (SLKKKPDTANDHRK) and 181-234 (VNKD…TGEK). C2H2-type zinc fingers lie at residues 255-277 (YECNHCGKVLSHKQGLLDHQRTH), 283-305 (YECNECGIAFSQKSHLVVHQRTH), 311-324 (YECEQCGKAHGHKH), 339-361 (YKCNECGKTFRHSSNLMQHLRSH), 367-389 (YECKECGKSFRYNSSLTEHVRTH), 395-417 (YECNECGKAFKYGSSLTKHMRIH), 423-445 (FECNECGKTFSKKSHLVIHQRTH), 451-473 (YKCDECGKAFGHSSSLTYHMRTH), 479-501 (FECNQCGKAFKQIEGLTQHQRVH), 507-529 (YECVECGKAFSQKSHLIVHQRTH), 535-557 (FECYECGKAFNAKSQLVIHQRSH), and 563-585 (YECIECGKAFKQNASLTKHMKIH).

The protein belongs to the krueppel C2H2-type zinc-finger protein family. As to expression, expressed in testis and brain.

It localises to the nucleus. In terms of biological role, may have a role in regulating spermiogenesis. In Mus musculus (Mouse), this protein is Zinc finger protein 37 (Zfp37).